The primary structure comprises 157 residues: 3-hydroxyacyl-[acyl-carrier-protein] dehydratase FabZ (157 aa).

The active site involves His-58.

This sequence belongs to the thioester dehydratase family. FabZ subfamily.

It is found in the cytoplasm. It carries out the reaction a (3R)-hydroxyacyl-[ACP] = a (2E)-enoyl-[ACP] + H2O. In terms of biological role, involved in unsaturated fatty acids biosynthesis. Catalyzes the dehydration of short chain beta-hydroxyacyl-ACPs and long chain saturated and unsaturated beta-hydroxyacyl-ACPs. The polypeptide is 3-hydroxyacyl-[acyl-carrier-protein] dehydratase FabZ (Rhizobium rhizogenes (strain K84 / ATCC BAA-868) (Agrobacterium radiobacter)).